A 241-amino-acid polypeptide reads, in one-letter code: Uracil-DNA glycosylase (241 aa).

Aspartate 71 functions as the Proton acceptor in the catalytic mechanism. The tract at residues 221–241 (ISPIDWSLPPRNELDTTSAGA) is disordered.

Belongs to the uracil-DNA glycosylase (UDG) superfamily. UNG family.

It is found in the cytoplasm. The catalysed reaction is Hydrolyzes single-stranded DNA or mismatched double-stranded DNA and polynucleotides, releasing free uracil.. In terms of biological role, excises uracil residues from the DNA which can arise as a result of misincorporation of dUMP residues by DNA polymerase or due to deamination of cytosine. The sequence is that of Uracil-DNA glycosylase from Xanthomonas oryzae pv. oryzae (strain MAFF 311018).